The chain runs to 137 residues: Large ribosomal subunit protein uL16 (137 aa).

Belongs to the universal ribosomal protein uL16 family. As to quaternary structure, part of the 50S ribosomal subunit.

In terms of biological role, binds 23S rRNA and is also seen to make contacts with the A and possibly P site tRNAs. In Bartonella tribocorum (strain CIP 105476 / IBS 506), this protein is Large ribosomal subunit protein uL16.